We begin with the raw amino-acid sequence, 539 residues long: MTGSKNKARAQAKLEKRASAQAKAAAEREAANAGRGAGKNRDKGKGKAGSKTDAVAEAKAGSKSKVVAETKEGARPESKAVAKGTSDFNHKAENKYARSARKDKPSSDSWFWAGEDSGINSWFWKGEEVSNNSVAKCENKPSTSIQARVEEHTPRTSHKSRSGAEEEEEENVIGNWFWEGDDTGFDSDPKPVFKIVKPQPVDEINEKDRPKDWSEVTIWPKAPAVTPAVLGYRSQDSSEGRPSSYIVLASNEEETSTTCTKNTRSSLQPIPEYPFGSDPCIQTLDEIRQQIKIREENGIKPFACPCKMECYLDSPEFEKLVNILKSTTDPLIHKIAQIAMGIHKVHPFAQEFINEVGVVTLIESLLSFSSPEVSIKKAVITLNSSGDDRQQMVEFHVKHMCKETVSFPLNSPGQQSGLKIIGQLTTESVHHYIVVSYFSELFHLLSQGNRKTRNLVLKVFLNMSENPKAARDMINMKALAALKLIFNQKEAKANLVSAVAIFINIKEHIRKGSIVVVDHLSYNTLTAIFREVKGIIERM.

A compositionally biased stretch (basic residues) spans 1–10; sequence MTGSKNKARA. 2 disordered regions span residues 1 to 111 and 132 to 170; these read MTGS…DSWF and NSVA…EEEE. 2 stretches are compositionally biased toward basic and acidic residues: residues 66–80 and 88–106; these read VVAE…ESKA and FNHK…DKPS. Residues 132-146 are compositionally biased toward polar residues; the sequence is NSVAKCENKPSTSIQ.

It belongs to the GPRASP family. Homodimer.

Its subcellular location is the cytoplasm. The protein localises to the nucleus. Survival and differentiation promoting protein that plays a role in the regulation of neurosynaptogenesis. Induces phosphatase PP2A activity which results in APP dephosphorylation and inhibits BACE1-mediated processing of APP. The protein is G protein-coupled receptor associated sorting protein 3 (Gprasp3) of Rattus norvegicus (Rat).